The sequence spans 122 residues: Large ribosomal subunit protein uL14 (122 aa).

The protein belongs to the universal ribosomal protein uL14 family. In terms of assembly, part of the 50S ribosomal subunit. Forms a cluster with proteins L3 and L19. In the 70S ribosome, L14 and L19 interact and together make contacts with the 16S rRNA in bridges B5 and B8.

Binds to 23S rRNA. Forms part of two intersubunit bridges in the 70S ribosome. The sequence is that of Large ribosomal subunit protein uL14 from Borrelia recurrentis (strain A1).